The primary structure comprises 932 residues: Protein translocase subunit SecA, chloroplastic (932 aa).

95-102 (MRTGEGKT) serves as a coordination point for ATP. Residues 632-641 (HESRRVDNQL) are compositionally biased toward basic and acidic residues. Positions 632 to 653 (HESRRVDNQLRGRSGRQGDPGS) are disordered.

Belongs to the SecA family.

The protein localises to the plastid. Its subcellular location is the chloroplast stroma. It localises to the chloroplast thylakoid membrane. The catalysed reaction is ATP + H2O + chloroplast-proteinSide 1 = ADP + phosphate + chloroplast-proteinSide 2.. Its function is as follows. Has a central role in coupling the hydrolysis of ATP to the transfer of proteins across the thylakoid membrane. The protein is Protein translocase subunit SecA, chloroplastic of Ostreococcus lucimarinus (strain CCE9901).